The chain runs to 376 residues: Methylthioribose-1-phosphate isomerase (376 aa).

Catalysis depends on D256, which acts as the Proton donor.

It belongs to the eIF-2B alpha/beta/delta subunits family. MtnA subfamily.

The protein resides in the cytoplasm. Its subcellular location is the nucleus. It catalyses the reaction 5-(methylsulfanyl)-alpha-D-ribose 1-phosphate = 5-(methylsulfanyl)-D-ribulose 1-phosphate. Its pathway is amino-acid biosynthesis; L-methionine biosynthesis via salvage pathway; L-methionine from S-methyl-5-thio-alpha-D-ribose 1-phosphate: step 1/6. Catalyzes the interconversion of methylthioribose-1-phosphate (MTR-1-P) into methylthioribulose-1-phosphate (MTRu-1-P). This Vitis vinifera (Grape) protein is Methylthioribose-1-phosphate isomerase.